The chain runs to 238 residues: Dolichyldiphosphatase 1 (238 aa).

Helical transmembrane passes span 33–53 (LAYLSLSPVVIIVGFVTLIIF), 100–120 (PSSHSQFMWFFSVYSFLFLYL), 130–150 (FLDLLWRHVLSLGLLTAAFLV), and 162–182 (WSQVLYGGVAGSLMAIAWFAF).

It belongs to the dolichyldiphosphatase family.

It localises to the endoplasmic reticulum membrane. The catalysed reaction is a di-trans,poly-cis-dolichyl diphosphate + H2O = a di-trans,poly-cis-dolichyl phosphate + phosphate + H(+). The protein operates within protein modification; protein glycosylation. Required for efficient N-glycosylation. Necessary for maintaining optimal levels of dolichol-linked oligosaccharides. Hydrolyzes dolichyl pyrophosphate at a very high rate and dolichyl monophosphate at a much lower rate. Does not act on phosphatidate. The polypeptide is Dolichyldiphosphatase 1 (DOLPP1) (Rhinolophus ferrumequinum (Greater horseshoe bat)).